The following is a 394-amino-acid chain: Elongation factor Tu (394 aa).

Residues 10–204 (KPHVNIGTIG…AVDSYIPQPV (195 aa)) form the tr-type G domain. The G1 stretch occupies residues 19-26 (GHVDHGKT). 19–26 (GHVDHGKT) is a GTP binding site. Thr26 contributes to the Mg(2+) binding site. Residues 60-64 (GITIS) form a G2 region. Residues 81–84 (DCPG) form a G3 region. Residues 81-85 (DCPGH) and 136-139 (NKVD) each bind GTP. Residues 136–139 (NKVD) are G4. Residues 174 to 176 (SAL) form a G5 region.

It belongs to the TRAFAC class translation factor GTPase superfamily. Classic translation factor GTPase family. EF-Tu/EF-1A subfamily. Monomer.

The protein localises to the cytoplasm. The catalysed reaction is GTP + H2O = GDP + phosphate + H(+). Functionally, GTP hydrolase that promotes the GTP-dependent binding of aminoacyl-tRNA to the A-site of ribosomes during protein biosynthesis. The protein is Elongation factor Tu of Rickettsia parkeri.